We begin with the raw amino-acid sequence, 266 residues long: Interleukin-1 beta (266 aa).

A propeptide spanning residues 1–113 is cleaved from the precursor; it reads MATVPEPTNE…ETYDDDLLCD (113 aa).

It belongs to the IL-1 family. Monomer. In its precursor form, weakly interacts with full-length MEFV; the mature cytokine does not interact at all. Interacts with integrins ITGAV:ITGBV and ITGA5:ITGB1; integrin-binding is required for IL1B signaling. Interacts with cargo receptor TMED10; the interaction is direct and is required for the secretion of IL1B mature form. Interacts with HSP90AB1; the interaction facilitates cargo translocation into the ERGIC. Interacts with HSP90B1; the interaction facilitates cargo translocation into the ERGIC.

The protein localises to the cytoplasm. Its subcellular location is the cytosol. It is found in the secreted. The protein resides in the lysosome. It localises to the extracellular exosome. In terms of biological role, potent pro-inflammatory cytokine. Initially discovered as the major endogenous pyrogen, induces prostaglandin synthesis, neutrophil influx and activation, T-cell activation and cytokine production, B-cell activation and antibody production, and fibroblast proliferation and collagen production. Promotes Th17 differentiation of T-cells. Synergizes with IL12/interleukin-12 to induce IFNG synthesis from T-helper 1 (Th1) cells. Plays a role in angiogenesis by inducing VEGF production synergistically with TNF and IL6. Involved in transduction of inflammation downstream of pyroptosis: its mature form is specifically released in the extracellular milieu by passing through the gasdermin-D (GSDMD) pore. The protein is Interleukin-1 beta (IL1B) of Delphinapterus leucas (Beluga whale).